A 396-amino-acid chain; its full sequence is Tyrosine--tRNA ligase (396 aa).

The 'HIGH' region signature appears at 42–51 (PTAPDIHLGH). Positions 226-230 (KMSKS) match the 'KMSKS' region motif. Lysine 229 contributes to the ATP binding site. In terms of domain architecture, S4 RNA-binding spans 334 to 395 (LPIANLLKEA…GKRKFAKIII (62 aa)).

The protein belongs to the class-I aminoacyl-tRNA synthetase family. TyrS type 2 subfamily. In terms of assembly, homodimer.

The protein localises to the cytoplasm. It catalyses the reaction tRNA(Tyr) + L-tyrosine + ATP = L-tyrosyl-tRNA(Tyr) + AMP + diphosphate + H(+). Its function is as follows. Catalyzes the attachment of tyrosine to tRNA(Tyr) in a two-step reaction: tyrosine is first activated by ATP to form Tyr-AMP and then transferred to the acceptor end of tRNA(Tyr). In Francisella tularensis subsp. tularensis (strain SCHU S4 / Schu 4), this protein is Tyrosine--tRNA ligase.